We begin with the raw amino-acid sequence, 266 residues long: Undecaprenyl-diphosphatase (266 aa).

7 consecutive transmembrane segments (helical) span residues 41–61 (NLAF…VILW), 82–102 (YVIN…FFKD), 106–126 (AIFG…AALL), 140–160 (ISMK…LPGL), 180–200 (LAQF…LLDG), 213–233 (IPTL…CLAC), and 245–265 (LIYF…VSQL).

This sequence belongs to the UppP family.

Its subcellular location is the cell inner membrane. It carries out the reaction di-trans,octa-cis-undecaprenyl diphosphate + H2O = di-trans,octa-cis-undecaprenyl phosphate + phosphate + H(+). Its function is as follows. Catalyzes the dephosphorylation of undecaprenyl diphosphate (UPP). Confers resistance to bacitracin. The chain is Undecaprenyl-diphosphatase from Bacteroides fragilis (strain YCH46).